The chain runs to 579 residues: DELLA protein GAIP (579 aa).

The segment at 1–25 is disordered; it reads MKREHHYLHPRPEPPSVATGSNRES. A DELLA motif motif is present at residues 46 to 50; that stretch reads DELLA. The GRAS domain occupies 202–570; that stretch reads VDSQENGIQL…RPLIATSAWK (369 aa). The segment at 209 to 263 is leucine repeat I (LRI); sequence IQLVHALMVCAEAVQQNNLNLAEALVKRIDYLAVSQAGAMRKVATFFAEALARRI. The VHIID stretch occupies residues 281–346; that stretch reads QMHFYESCPY…SGPPTFRLTG (66 aa). A VHIID motif is present at residues 312–316; it reads VHVID. A leucine repeat II (LRII) region spans residues 360–392; that stretch reads DVGWKLVKFAETLHVEFEYRGFVANSLADLDAS. Positions 404 to 491 are PFYRE; the sequence is VVVNSVFELH…EMYLGKQICN (88 aa). The short motif at 412-416 is the LXXLL motif element; it reads LHQLL. The tract at residues 494-570 is SAW; it reads ACEGADRVER…RPLIATSAWK (77 aa).

This sequence belongs to the GRAS family. DELLA subfamily. Post-translationally, phosphorylated. Ubiquitinated. Upon GA application it is ubiquitinated, leading to its subsequent degradation.

The protein resides in the nucleus. In terms of biological role, probable transcriptional regulator that acts as a repressor of the gibberellin (GA) signaling pathway. Probably acts by participating in large multiprotein complexes that represses transcription of GA-inducible genes. Upon GA application, it is degraded by the proteasome, allowing the GA signaling pathway. The chain is DELLA protein GAIP (GAIP) from Cucurbita maxima (Pumpkin).